Here is an 82-residue protein sequence, read N- to C-terminus: Sec-independent protein translocase protein TatA (82 aa).

Residues 1–21 form a helical membrane-spanning segment; that stretch reads MGGISIWQLLIIAVIVVLLFG.

This sequence belongs to the TatA/E family. In terms of assembly, the Tat system comprises two distinct complexes: a TatABC complex, containing multiple copies of TatA, TatB and TatC subunits, and a separate TatA complex, containing only TatA subunits. Substrates initially bind to the TatABC complex, which probably triggers association of the separate TatA complex to form the active translocon.

It localises to the cell inner membrane. Part of the twin-arginine translocation (Tat) system that transports large folded proteins containing a characteristic twin-arginine motif in their signal peptide across membranes. TatA could form the protein-conducting channel of the Tat system. This Vibrio cholerae serotype O1 (strain ATCC 39315 / El Tor Inaba N16961) protein is Sec-independent protein translocase protein TatA.